The chain runs to 376 residues: Dehydrogenase/reductase SDR family member FEY (376 aa).

N-acetylserine is present on S2. 61–85 contacts NAD(+); the sequence is VVTGSTSGIGRETARQLAEAGAHVV. Substrate is bound at residue S199. The active-site Proton acceptor is Y227.

The protein belongs to the short-chain dehydrogenases/reductases (SDR) family. As to expression, expressed in roots, stems, leaves and flowers and, at lower levels, in siliques.

Functionally, putative oxidoreductase. Required for vegetative shoot apex development, especially during leaf positioning and for shoot apical meristem (SAM) maintenance. This Arabidopsis thaliana (Mouse-ear cress) protein is Dehydrogenase/reductase SDR family member FEY.